The sequence spans 386 residues: Phosphoglycerate kinase (386 aa).

Residues 21–23 (DLN), R36, 59–62 (HLGR), R113, and R146 each bind substrate. Residues K197, E313, and 339-342 (GGDT) contribute to the ATP site.

The protein belongs to the phosphoglycerate kinase family. As to quaternary structure, monomer.

The protein localises to the cytoplasm. It carries out the reaction (2R)-3-phosphoglycerate + ATP = (2R)-3-phospho-glyceroyl phosphate + ADP. It participates in carbohydrate degradation; glycolysis; pyruvate from D-glyceraldehyde 3-phosphate: step 2/5. The polypeptide is Phosphoglycerate kinase (Serratia proteamaculans (strain 568)).